The following is a 260-amino-acid chain: Indole-3-glycerol phosphate synthase (260 aa).

The protein belongs to the TrpC family.

The enzyme catalyses 1-(2-carboxyphenylamino)-1-deoxy-D-ribulose 5-phosphate + H(+) = (1S,2R)-1-C-(indol-3-yl)glycerol 3-phosphate + CO2 + H2O. It functions in the pathway amino-acid biosynthesis; L-tryptophan biosynthesis; L-tryptophan from chorismate: step 4/5. The sequence is that of Indole-3-glycerol phosphate synthase from Bacteroides thetaiotaomicron (strain ATCC 29148 / DSM 2079 / JCM 5827 / CCUG 10774 / NCTC 10582 / VPI-5482 / E50).